Consider the following 674-residue polypeptide: MSKVFSLSSGFSPAGDQPTAINQLLEGLDSGLAHQTLLGVTGSGKTFTIANVIAESNRPTFIMAPNKTLAAQLYGEMKEFFPDNAVEYFVSYYDYYQPEAYVPTTDTFIEKDASVNAHIEQMRLSATKALLERRDVIIIASVSAIYGLGDPDSYLKMMLHVRRGDMLNQRDILRRLAELQYTRNDVSFERGHFRVRGEVIDVFPAESEHDAIRIELFDDEVECINVFDPLTGAVLQKDLPRCTIYPKTHYVTPREKILEAIEKIKDELVVRRKQLMDSNKLVEEQRISQRTQFDIEMMNELGFCSGIENYSRYLSGREEGEPPPTLFDYLPADGLLIIDESHVTVSQIGAMYRGDRSRKENLVEYGFRLPSALDNRPMKFEEFASLAPQTIYVSATPGKYEIEQSGNDIAEQVVRPTGLLDPIIEVRPVATQVDDLLSEIRIREVKGERVLVTTLTKRMSEDLAEYLAEHNVKVRYLHSDIDTVERVEIIRDLRLGVFDVLVGINLLREGLDIPEVSLVAILDADKEGFLRSERSLIQTIGRAARNLEGRAILYGDKITGSMERAIFETNRRREKQALHNKKNGITPQGLNKKVGDILELGKPSSRSRTNKAAQLNRVAESKGTYVNLSPQQLELEIQRLETEMYDLAQNLEFEKAAEARDKIHTLRQQFIMNS.

In terms of domain architecture, Helicase ATP-binding spans 26-414 (EGLDSGLAHQ…SGNDIAEQVV (389 aa)). Residue 39–46 (GVTGSGKT) coordinates ATP. A Beta-hairpin motif is present at residues 92-115 (YYDYYQPEAYVPTTDTFIEKDASV). The 155-residue stretch at 432-586 (QVDDLLSEIR…ALHNKKNGIT (155 aa)) folds into the Helicase C-terminal domain. The region spanning 634–669 (ELEIQRLETEMYDLAQNLEFEKAAEARDKIHTLRQQ) is the UVR domain.

Belongs to the UvrB family. In terms of assembly, forms a heterotetramer with UvrA during the search for lesions. Interacts with UvrC in an incision complex.

It is found in the cytoplasm. In terms of biological role, the UvrABC repair system catalyzes the recognition and processing of DNA lesions. A damage recognition complex composed of 2 UvrA and 2 UvrB subunits scans DNA for abnormalities. Upon binding of the UvrA(2)B(2) complex to a putative damaged site, the DNA wraps around one UvrB monomer. DNA wrap is dependent on ATP binding by UvrB and probably causes local melting of the DNA helix, facilitating insertion of UvrB beta-hairpin between the DNA strands. Then UvrB probes one DNA strand for the presence of a lesion. If a lesion is found the UvrA subunits dissociate and the UvrB-DNA preincision complex is formed. This complex is subsequently bound by UvrC and the second UvrB is released. If no lesion is found, the DNA wraps around the other UvrB subunit that will check the other stand for damage. This chain is UvrABC system protein B, found in Photobacterium profundum (strain SS9).